The sequence spans 572 residues: Urease subunit alpha (572 aa).

The Urease domain occupies 132–572 (GGFDSHIHFI…LPMAQRYFMY (441 aa)). Ni(2+) is bound by residues histidine 137, histidine 139, and lysine 220. The residue at position 220 (lysine 220) is an N6-carboxylysine. Substrate is bound at residue histidine 222. 2 residues coordinate Ni(2+): histidine 249 and histidine 275. Histidine 323 (proton donor) is an active-site residue. Position 363 (aspartate 363) interacts with Ni(2+).

The protein belongs to the metallo-dependent hydrolases superfamily. Urease alpha subunit family. In terms of assembly, heterotrimer of UreA (gamma), UreB (beta) and UreC (alpha) subunits. Three heterotrimers associate to form the active enzyme. Ni cation serves as cofactor. Carboxylation allows a single lysine to coordinate two nickel ions.

It is found in the cytoplasm. It carries out the reaction urea + 2 H2O + H(+) = hydrogencarbonate + 2 NH4(+). Its pathway is nitrogen metabolism; urea degradation; CO(2) and NH(3) from urea (urease route): step 1/1. This Bradyrhizobium diazoefficiens (strain JCM 10833 / BCRC 13528 / IAM 13628 / NBRC 14792 / USDA 110) protein is Urease subunit alpha.